The following is a 169-amino-acid chain: Type II secretion system protein H (169 aa).

The propeptide at M1–E29 is leader sequence. An N-methylmethionine modification is found at M30. Residues L32–I52 traverse the membrane as a helical segment.

The protein belongs to the GSP H family. As to quaternary structure, type II secretion is composed of four main components: the outer membrane complex, the inner membrane complex, the cytoplasmic secretion ATPase and the periplasm-spanning pseudopilus. Interacts with core component XpsG. Interacts with minor pseudopilins XpsI and XpsJ. Cleaved by prepilin peptidase. Post-translationally, methylated by prepilin peptidase at the amino group of the N-terminal phenylalanine once the leader sequence is cleaved by prepilin peptidase.

The protein localises to the cell inner membrane. Its function is as follows. Component of the type II secretion system required for the energy-dependent secretion of extracellular factors such as proteases and toxins from the periplasm. Part of the pseudopilus tip complex that is critical for the recognition and binding of secretion substrates. In Xanthomonas campestris pv. campestris (strain ATCC 33913 / DSM 3586 / NCPPB 528 / LMG 568 / P 25), this protein is Type II secretion system protein H (xpsH).